Reading from the N-terminus, the 102-residue chain is Large ribosomal subunit protein bL21 (102 aa).

This sequence belongs to the bacterial ribosomal protein bL21 family. Part of the 50S ribosomal subunit. Contacts protein L20.

In terms of biological role, this protein binds to 23S rRNA in the presence of protein L20. In Bacillus velezensis (strain DSM 23117 / BGSC 10A6 / LMG 26770 / FZB42) (Bacillus amyloliquefaciens subsp. plantarum), this protein is Large ribosomal subunit protein bL21.